The sequence spans 420 residues: MSDNGPQNQRSAPRITFGGPSDSTDNNQDGGRSGARPKQRRPQGLPNNTASWFTALTQHGKEELRFPRGQGVPINTNSGKDDQIGYYRRATRRVRGGDGKMKKLSPRWYFYYLGTGPEASLPYGANKEGIVWVATEGALNTPKDHIGTRNPNNNAAIVLQLPQGTTLPKGFYAEGSRGGSQASSRSSSRSRGNSRNSTPGSSRGNSPARMASGSGETALALLLLDRLNQLESKVSGKGQQQQGQTVTKKSAAEASKKPRQKRTATKSYNVTQAFGRRGPEQTQGNFGDQDLIRQGTDYKYWPQIAQFAPSASAFFGMSRIGMEVTPLGTWLTYHGAIKLDDKDPQFKDNVILLNKHIDAYKAFPPTEPKKDKKKKTDEAQPLPQRKKQPTVTLLPAADMDDFSRQLQNSMSGASADSTQA.

Composition is skewed to polar residues over residues 1-11 and 21-30; these read MSDNGPQNQRS and SDSTDNNQDG. A disordered region spans residues 1–49; sequence MSDNGPQNQRSAPRITFGGPSDSTDNNQDGGRSGARPKQRRPQGLPNNT. The RNA-binding stretch occupies residues 41–186; sequence RPQGLPNNTA…RGGSQASSRS (146 aa). Residues 48–175 enclose the CoV N NTD domain; sequence NTASWFTALT…TLPKGFYAEG (128 aa). RNA contacts are provided by Arg-92, Arg-107, and Arg-149. Disordered stretches follow at residues 168-214, 233-286, and 362-420; these read PKGF…ASGS, KVSG…QGNF, and AFPP…STQA. Ser-176 bears the Phosphoserine; by host mark. Low complexity-rich tracts occupy residues 179 to 206 and 233 to 249; these read GSQASSRSSSRSRGNSRNSTPGSSRGNS and KVSGKGQQQQGQTVTKK. Residues 247–364 enclose the CoV N CTD domain; that stretch reads TKKSAAEASK…KHIDAYKAFP (118 aa). The tract at residues 258-361 is dimerization; that stretch reads PRQKRTATKS…LLNKHIDAYK (104 aa). The segment covering 367–378 has biased composition (basic and acidic residues); it reads EPKKDKKKKTDE. Positions 404 to 420 are enriched in polar residues; the sequence is RQLQNSMSGASADSTQA.

Belongs to the betacoronavirus nucleocapsid protein family. Homooligomer. Both monomeric and oligomeric forms interact with RNA. Interacts with protein M. Interacts with NSP3; this interaction serves to tether the genome to the newly translated replicase-transcriptase complex at a very early stage of infection. Post-translationally, ADP-ribosylated. The ADP-ribosylation is retained in the virion during infection. Phosphorylated on serine and threonine residues.

The protein resides in the virion. It localises to the host endoplasmic reticulum-Golgi intermediate compartment. It is found in the host Golgi apparatus. Packages the positive strand viral genome RNA into a helical ribonucleocapsid (RNP) and plays a fundamental role during virion assembly through its interactions with the viral genome and membrane protein M. Plays an important role in enhancing the efficiency of subgenomic viral RNA transcription as well as viral replication. This chain is Nucleoprotein, found in Rhinolophus macrotis (Big-eared horseshoe bat).